We begin with the raw amino-acid sequence, 415 residues long: Transfer protein TraSA (415 aa).

Residues 127-326 form the FtsK domain; that stretch reads DGAVHYRDYR…HRVNDETSAN (200 aa). ATP is bound at residue 145 to 152; that stretch reads GATESGKS.

The chain is Transfer protein TraSA (traSA) from Streptomyces ambofaciens.